A 156-amino-acid chain; its full sequence is Ribosomal RNA large subunit methyltransferase H (156 aa).

S-adenosyl-L-methionine is bound by residues leucine 73, glycine 104, and 123–128 (LSALTL).

The protein belongs to the RNA methyltransferase RlmH family. Homodimer.

The protein localises to the cytoplasm. It catalyses the reaction pseudouridine(1915) in 23S rRNA + S-adenosyl-L-methionine = N(3)-methylpseudouridine(1915) in 23S rRNA + S-adenosyl-L-homocysteine + H(+). Functionally, specifically methylates the pseudouridine at position 1915 (m3Psi1915) in 23S rRNA. This Shewanella sediminis (strain HAW-EB3) protein is Ribosomal RNA large subunit methyltransferase H.